The primary structure comprises 180 residues: ATP synthase subunit b, chloroplastic (180 aa).

A helical membrane pass occupies residues 28 to 48 (VTTLINIGVVLCLLIIFGKGF).

This sequence belongs to the ATPase B chain family. As to quaternary structure, F-type ATPases have 2 components, F(1) - the catalytic core - and F(0) - the membrane proton channel. F(1) has five subunits: alpha(3), beta(3), gamma(1), delta(1), epsilon(1). F(0) has four main subunits: a(1), b(1), b'(1) and c(10-14). The alpha and beta chains form an alternating ring which encloses part of the gamma chain. F(1) is attached to F(0) by a central stalk formed by the gamma and epsilon chains, while a peripheral stalk is formed by the delta, b and b' chains.

Its subcellular location is the plastid. The protein resides in the chloroplast thylakoid membrane. Its function is as follows. F(1)F(0) ATP synthase produces ATP from ADP in the presence of a proton or sodium gradient. F-type ATPases consist of two structural domains, F(1) containing the extramembraneous catalytic core and F(0) containing the membrane proton channel, linked together by a central stalk and a peripheral stalk. During catalysis, ATP synthesis in the catalytic domain of F(1) is coupled via a rotary mechanism of the central stalk subunits to proton translocation. Functionally, component of the F(0) channel, it forms part of the peripheral stalk, linking F(1) to F(0). This Cuscuta obtusiflora (Peruvian dodder) protein is ATP synthase subunit b, chloroplastic.